A 158-amino-acid chain; its full sequence is MSHGKGTDMLPEIAAAVGFLSSLLRTRGCVSEQRLKVFSGALQEALTEHYKHHWFPEKPSKGSGYRCIRINHKMDPIISRVASQIGLSQPQLHQLLPSELTLWVDPYEVSYRIGEDGSICVLYEEAPLAASCGLLTCKNQVLLGRSSPSKNYVMAVSS.

The residue at position 147 (Ser147) is a Phosphoserine; by MAPK1 and MAPK3. Ser149 carries the post-translational modification Phosphoserine; by MAPK14.

Belongs to the BTG family. As to quaternary structure, interacts with PRKCABP. Interacts with CNOT7 and CNOT8; indicative for an association with the CCR4-NOT complex. Interacts with PIN1, inducing mitochondrial depolarization. In terms of processing, phosphorylated at Ser-147 by MAPK1/ERK2 and MAPK3/ERK1, and at Ser-149 by MAPK14, leading to PIN1-binding and mitochondrial depolarization.

Anti-proliferative protein; the function is mediated by association with deadenylase subunits of the CCR4-NOT complex. Activates mRNA deadenylation in a CNOT6 and CNOT7-dependent manner. In vitro can inhibit deadenylase activity of CNOT7 and CNOT8. Involved in cell cycle regulation. Could be involved in the growth arrest and differentiation of the neuronal precursors. Modulates transcription regulation mediated by ESR1. Involved in mitochondrial depolarization and neurite outgrowth. This chain is Protein BTG2 (BTG2), found in Homo sapiens (Human).